The following is a 1036-amino-acid chain: uncharacterized protein (1036 aa).

The first 24 residues, 1 to 24 (MKRVGLIGVIMAALLVISATPVMA), serve as a signal peptide directing secretion. A helical membrane pass occupies residues 1011–1033 (GGGVPGFEAVFAIAGLLAVAYLL).

The protein localises to the membrane. This is an uncharacterized protein from Archaeoglobus fulgidus (strain ATCC 49558 / DSM 4304 / JCM 9628 / NBRC 100126 / VC-16).